Here is a 335-residue protein sequence, read N- to C-terminus: Leukocyte immunoglobulin-like receptor subfamily B member 4A (335 aa).

Residues 1 to 23 (MIAMLTVLLYLGLILEPRTAVQA) form the signal peptide. Topologically, residues 24–238 (GHLPKPIIWA…TEDGLETYQK (215 aa)) are extracellular. 2 consecutive Ig-like C2-type domains span residues 42–125 (YTSV…ENPS) and 124–212 (PSLS…KPSN). The cysteines at positions 49 and 98 are disulfide-linked. Residues Asn-133 and Asn-191 are each glycosylated (N-linked (GlcNAc...) asparagine). The cysteines at positions 144 and 196 are disulfide-linked. A helical membrane pass occupies residues 239–260 (ILIGVLVSFLLLFFLLLFLILI). At 261 to 335 (GYQYGHKKKA…CIRTQEQNNS (75 aa)) the chain is on the cytoplasmic side. 2 short sequence motifs (ITIM motif) span residues 298–303 (IVYAQV) and 320–325 (VTYAQL).

In terms of assembly, interacts (when tyrosine phosphorylated) with SH2 domain-containing phosphatases PTPN6/SHP-1 and PTPN11/SHP-2; interaction with PTPN6 enhances inhibition of mast cell activation. Tyrosine phosphorylated. In terms of tissue distribution, expressed on mast cells and natural killer cells (at protein level). Expressed on neutrophils (at protein level). Expressed on eosinophils (at protein level). Expressed on dendritic cells (at protein level). Expressed on memory and marginal zone B cells (at protein level). Expressed on CD8 T cells (at protein level). Expressed in the uterus of pregnant mice where it is detected at day 4.0 of pregnancy with levels dropping at day 4.5. Highly expressed in the luminal epithelium of uterine endometrium with lower levels in the glandular epithelium.

Its subcellular location is the cell membrane. In terms of biological role, inhibitory receptor involved in the down-regulation of the immune response. Receptor for FN1. Receptor for integrin ITGAV/ITGB3. Inhibits IgE-mediated mast cell activation, at least in part through interaction with ITGAV/ITGB3. Also inhibits KITLG/SCF-mediated mast cell activation. Through interaction with ITGAV/ITGB3, inhibits antibody production by memory and marginal zone B cells, probably by suppressing their differentiation into plasma cells. Inhibits IFNG production by CD8 T cells, CD4 T cells and natural killer cells. Inhibits antigen presentation by dendritic cells to T cells, preventing T cell activation. Inhibits lipopolysaccharide-mediated neutrophil-dependent vascular injury. Suppresses the allergic inflammatory response by inhibiting infiltration of neutrophils and eosinophils and preventing mast cell degranulation. Inhibits lysis by natural killer cells. This Mus musculus (Mouse) protein is Leukocyte immunoglobulin-like receptor subfamily B member 4A.